The chain runs to 127 residues: uncharacterized protein (127 aa).

Helical transmembrane passes span 1-21, 32-52, 68-88, and 100-120; these read MYII…YILV, TVAA…LYVF, AFFS…IILV, and ILDN…LVFK.

Belongs to the GtrA family.

It is found in the cell membrane. This is an uncharacterized protein from Bacillus subtilis (strain 168).